A 107-amino-acid polypeptide reads, in one-letter code: Iron-sulfur cluster assembly protein CyaY (107 aa).

The protein belongs to the frataxin family.

Functionally, involved in iron-sulfur (Fe-S) cluster assembly. May act as a regulator of Fe-S biogenesis. The polypeptide is Iron-sulfur cluster assembly protein CyaY (Neisseria gonorrhoeae (strain ATCC 700825 / FA 1090)).